The following is a 292-amino-acid chain: tRNA dimethylallyltransferase (292 aa).

ATP is bound at residue 10–17 (GPTASGKS). 12 to 17 (TASGKS) is a substrate binding site. Interaction with substrate tRNA stretches follow at residues 35–38 (DSMQ) and 159–163 (QRIVR).

It belongs to the IPP transferase family. As to quaternary structure, monomer. It depends on Mg(2+) as a cofactor.

It catalyses the reaction adenosine(37) in tRNA + dimethylallyl diphosphate = N(6)-dimethylallyladenosine(37) in tRNA + diphosphate. Functionally, catalyzes the transfer of a dimethylallyl group onto the adenine at position 37 in tRNAs that read codons beginning with uridine, leading to the formation of N6-(dimethylallyl)adenosine (i(6)A). This chain is tRNA dimethylallyltransferase, found in Chelativorans sp. (strain BNC1).